The sequence spans 430 residues: Phosphoglucosamine mutase (430 aa).

Catalysis depends on Ser93, which acts as the Phosphoserine intermediate. Mg(2+) contacts are provided by Ser93, Asp227, Asp229, and Asp231. At Ser93 the chain carries Phosphoserine.

Belongs to the phosphohexose mutase family. Requires Mg(2+) as cofactor. Post-translationally, activated by phosphorylation.

The enzyme catalyses alpha-D-glucosamine 1-phosphate = D-glucosamine 6-phosphate. In terms of biological role, catalyzes the conversion of glucosamine-6-phosphate to glucosamine-1-phosphate. This chain is Phosphoglucosamine mutase, found in Thermosipho africanus (strain TCF52B).